A 421-amino-acid chain; its full sequence is Plant UBX domain-containing protein 5 (421 aa).

In terms of domain architecture, UBA spans 4-45 (ETNENLINSFIEITSSSREEANFFLESHTWNLDAAVSTFLDN). Disordered regions lie at residues 46–171 (DAAA…MMVQ) and 292–338 (ENFT…PSRG). The span at 69 to 84 (QSPSQSHSPDYTPSET) shows a compositional bias: polar residues. A compositionally biased stretch (low complexity) spans 85–102 (SPSPSRSRSASPSSRAAP). Positions 231–295 (RIMHTITFWL…DLVRRGENFT (65 aa)) constitute an SEP domain. Residues 312-328 (GASGSGSSSAPQASSAP) are compositionally biased toward low complexity. The UBX domain maps to 343–420 (PAAPTTSIQL…GIANAVVIQK (78 aa)).

As to quaternary structure, interacts with CDC48A (non-hexameric) via its UBX domain.

This Arabidopsis thaliana (Mouse-ear cress) protein is Plant UBX domain-containing protein 5.